The sequence spans 100 residues: Aspartyl/glutamyl-tRNA(Asn/Gln) amidotransferase subunit C (100 aa).

This sequence belongs to the GatC family. Heterotrimer of A, B and C subunits.

The catalysed reaction is L-glutamyl-tRNA(Gln) + L-glutamine + ATP + H2O = L-glutaminyl-tRNA(Gln) + L-glutamate + ADP + phosphate + H(+). It catalyses the reaction L-aspartyl-tRNA(Asn) + L-glutamine + ATP + H2O = L-asparaginyl-tRNA(Asn) + L-glutamate + ADP + phosphate + 2 H(+). In terms of biological role, allows the formation of correctly charged Asn-tRNA(Asn) or Gln-tRNA(Gln) through the transamidation of misacylated Asp-tRNA(Asn) or Glu-tRNA(Gln) in organisms which lack either or both of asparaginyl-tRNA or glutaminyl-tRNA synthetases. The reaction takes place in the presence of glutamine and ATP through an activated phospho-Asp-tRNA(Asn) or phospho-Glu-tRNA(Gln). In Rickettsia bellii (strain OSU 85-389), this protein is Aspartyl/glutamyl-tRNA(Asn/Gln) amidotransferase subunit C.